A 327-amino-acid chain; its full sequence is uncharacterized protein (327 aa).

Over methionine 1 to alanine 19 the chain is Cytoplasmic. Residues alanine 20 to phenylalanine 40 form a helical membrane-spanning segment. Over lysine 41–asparagine 51 the chain is Extracellular. A helical transmembrane segment spans residues alanine 52 to leucine 72. Residues glutamate 73 to cysteine 104 lie on the Cytoplasmic side of the membrane. Residues leucine 105 to methionine 125 traverse the membrane as a helical segment. Over proline 126–glycine 141 the chain is Extracellular. The helical transmembrane segment at isoleucine 142 to isoleucine 162 threads the bilayer. Residues asparagine 163 to glutamine 199 are Cytoplasmic-facing. The helical transmembrane segment at valine 200–alanine 220 threads the bilayer. The Extracellular segment spans residues serine 221–glycine 235. A helical transmembrane segment spans residues isoleucine 236–isoleucine 256. At proline 257–serine 275 the chain is on the cytoplasmic side. A helical membrane pass occupies residues isoleucine 276–glycine 296. The Extracellular segment spans residues threonine 297–glycine 300. The chain crosses the membrane as a helical span at residues leucine 301–tryptophan 321. Over leucine 322–cysteine 327 the chain is Cytoplasmic.

Its subcellular location is the membrane. This is an uncharacterized protein from Saccharomyces cerevisiae (strain ATCC 204508 / S288c) (Baker's yeast).